The following is a 290-amino-acid chain: Alpha-mannosidase (290 aa).

Aspartate 17 (nucleophile) is an active-site residue. Asparagine 64 is a glycosylation site (N-linked (GlcNAc...) asparagine).

This sequence belongs to the glycosyl hydrolase 38 family. Dimer. The cofactor is Zn(2+).

It catalyses the reaction Hydrolysis of terminal, non-reducing alpha-D-mannose residues in alpha-D-mannosides.. Inhibited by swainsonine but not by 1-desoxymannojirimycin. In terms of biological role, liberates mannose from p-nitrophenyl-alpha-D-mannoside. In Lablab purpureus (Hyacinth bean), this protein is Alpha-mannosidase.